The following is a 211-amino-acid chain: UPF0637 protein BLi01683/BL05149 (211 aa).

The protein belongs to the UPF0637 family.

The chain is UPF0637 protein BLi01683/BL05149 from Bacillus licheniformis (strain ATCC 14580 / DSM 13 / JCM 2505 / CCUG 7422 / NBRC 12200 / NCIMB 9375 / NCTC 10341 / NRRL NRS-1264 / Gibson 46).